The sequence spans 366 residues: GTPase Obg (366 aa).

Positions 1–159 (MKFLDEAKVY…KTIWLRLKLI (159 aa)) constitute an Obg domain. The region spanning 160 to 327 (ADAGLVGLPN…VLRALRDVIV (168 aa)) is the OBG-type G domain. GTP-binding positions include 166 to 173 (GLPNAGKS), 191 to 195 (FTTLH), 212 to 215 (DIPG), 279 to 282 (SQID), and 308 to 310 (SAI). Mg(2+) contacts are provided by Ser-173 and Thr-193. The interval 333–366 (DDETISQRPKKHRHKLEDRPQHENGPEESEEGEE) is disordered. The segment covering 347-357 (KLEDRPQHENG) has biased composition (basic and acidic residues).

The protein belongs to the TRAFAC class OBG-HflX-like GTPase superfamily. OBG GTPase family. Monomer. Requires Mg(2+) as cofactor.

The protein localises to the cytoplasm. Its function is as follows. An essential GTPase which binds GTP, GDP and possibly (p)ppGpp with moderate affinity, with high nucleotide exchange rates and a fairly low GTP hydrolysis rate. Plays a role in control of the cell cycle, stress response, ribosome biogenesis and in those bacteria that undergo differentiation, in morphogenesis control. The chain is GTPase Obg from Allorhizobium ampelinum (strain ATCC BAA-846 / DSM 112012 / S4) (Agrobacterium vitis (strain S4)).